Reading from the N-terminus, the 365-residue chain is Phospho-N-acetylmuramoyl-pentapeptide-transferase (365 aa).

The next 10 membrane-spanning stretches (helical) occupy residues 22-42 (YVSV…LFLG), 74-94 (TMGG…WGSL), 95-115 (SSIY…IGFF), 134-154 (KFAL…YLLS), 169-189 (LHIP…INGS), 201-221 (GLAI…AYIQ), 240-260 (LAEV…FLWF), 268-288 (FMGD…AVMI), 292-312 (LIFF…MLQV), and 342-362 (KVVI…LVAI).

Belongs to the glycosyltransferase 4 family. MraY subfamily. The cofactor is Mg(2+).

The protein localises to the cell inner membrane. It carries out the reaction UDP-N-acetyl-alpha-D-muramoyl-L-alanyl-gamma-D-glutamyl-meso-2,6-diaminopimeloyl-D-alanyl-D-alanine + di-trans,octa-cis-undecaprenyl phosphate = di-trans,octa-cis-undecaprenyl diphospho-N-acetyl-alpha-D-muramoyl-L-alanyl-D-glutamyl-meso-2,6-diaminopimeloyl-D-alanyl-D-alanine + UMP. It participates in cell wall biogenesis; peptidoglycan biosynthesis. Its function is as follows. Catalyzes the initial step of the lipid cycle reactions in the biosynthesis of the cell wall peptidoglycan: transfers peptidoglycan precursor phospho-MurNAc-pentapeptide from UDP-MurNAc-pentapeptide onto the lipid carrier undecaprenyl phosphate, yielding undecaprenyl-pyrophosphoryl-MurNAc-pentapeptide, known as lipid I. The chain is Phospho-N-acetylmuramoyl-pentapeptide-transferase from Francisella philomiragia subsp. philomiragia (strain ATCC 25017 / CCUG 19701 / FSC 153 / O#319-036).